The chain runs to 126 residues: Large ribosomal subunit protein eL8 (126 aa).

Belongs to the eukaryotic ribosomal protein eL8 family. As to quaternary structure, part of the 50S ribosomal subunit. Probably part of the RNase P complex.

It localises to the cytoplasm. In terms of biological role, multifunctional RNA-binding protein that recognizes the K-turn motif in ribosomal RNA, the RNA component of RNase P, box H/ACA, box C/D and box C'/D' sRNAs. This Cenarchaeum symbiosum (strain A) protein is Large ribosomal subunit protein eL8.